An 809-amino-acid polypeptide reads, in one-letter code: Sucrose synthase 3 (809 aa).

The interval 277-755 (MVFNVVILSP…GLQRIYERYT (479 aa)) is GT-B glycosyltransferase.

Belongs to the glycosyltransferase 1 family. Plant sucrose synthase subfamily. Detected in the whole plant with highest expression in developing siliques, vasculature of cotyledons and stomatal guard cells. Also detected throughout the mature parts of the root but not in the expanding zone.

It catalyses the reaction an NDP-alpha-D-glucose + D-fructose = a ribonucleoside 5'-diphosphate + sucrose + H(+). Its function is as follows. Sucrose-cleaving enzyme that provides UDP-glucose and fructose for various metabolic pathways. Modulates metabolic homeostasis and direct carbon towards starch synthesis in developing seeds. In Arabidopsis thaliana (Mouse-ear cress), this protein is Sucrose synthase 3 (SUS3).